We begin with the raw amino-acid sequence, 84 residues long: Large ribosomal subunit protein bL27 (84 aa).

Residues 1–20 (MAHKKSGGASRNGRDSNPKY) form a disordered region.

This sequence belongs to the bacterial ribosomal protein bL27 family.

The protein is Large ribosomal subunit protein bL27 of Dictyoglomus thermophilum (strain ATCC 35947 / DSM 3960 / H-6-12).